The primary structure comprises 193 residues: Putative RNA methyltransferase At5g10620 (193 aa).

S-adenosyl-L-methionine-binding positions include Leu110, Gly142, and 161–166; that span reads LSSMVL.

This sequence belongs to the RNA methyltransferase RlmH family.

This chain is Putative RNA methyltransferase At5g10620, found in Arabidopsis thaliana (Mouse-ear cress).